The sequence spans 387 residues: Patatin group D-2 (387 aa).

Positions 1–23 (MATTKSFLILIVMILATTSSTFA) are cleaved as a signal peptide. In terms of domain architecture, PNPLA spans 32–230 (LSIDGGGIKG…TVADPALLSI (199 aa)). The GXGXXG motif lies at 36–41 (GGGIKG). Positions 75 to 79 (GTSTG) match the GXSXG motif. The active-site Nucleophile is the serine 77. N-linked (GlcNAc...) asparagine glycosylation occurs at asparagine 115. The active-site Proton acceptor is aspartate 216. Residues 216–218 (DGA) carry the DGA/G motif. Residues 361 to 385 (ETYEEALKRFAKLLSDRKKLRANKA) adopt a coiled-coil conformation.

The protein belongs to the patatin family. In terms of tissue distribution, tuber.

It localises to the vacuole. Probable lipolytic acyl hydrolase (LAH), an activity which is thought to be involved in the response of tubers to pathogens. This is Patatin group D-2 from Solanum tuberosum (Potato).